Here is a 56-residue protein sequence, read N- to C-terminus: Preprotein translocase subunit SecG (56 aa).

Residues 1-30 (MARKDKKTLPASGAGIVRYFNDDTAGVKLS) lie on the Cytoplasmic side of the membrane. The chain crosses the membrane as a helical span at residues 31–52 (PKQVVIGTIIVALICIALRFTT). Over 53-56 (SVGY) the chain is Extracellular.

This sequence belongs to the SEC61-beta family. As to quaternary structure, component of the protein translocase complex. Heterotrimer consisting of alpha (SecY), beta (SecG) and gamma (SecE) subunits. Can form oligomers of the heterotrimer.

Its subcellular location is the cell membrane. Involved in protein export. The function of the beta subunit is unknown, but it may be involved in stabilization of the trimeric complex. The protein is Preprotein translocase subunit SecG of Methanosphaera stadtmanae (strain ATCC 43021 / DSM 3091 / JCM 11832 / MCB-3).